Reading from the N-terminus, the 808-residue chain is MLHDARDRQKFFSDVQYLRDMQHKVDSEYQACLRRQEYRRDPNEKKRDQFWGQETSFERSRFSSRSSSKQSSSEEDALTEPRSSIKISAFKCDSKLPAIDQTSVKQKHKSTMTVRKAEKVDPSEPSPADQAPMVLLRKRKPNLRRFTVSPESHSPRASGDRSRQKQQWPAKVPVPRGADQVVQQEGLMCNTKLKRPNQERRNLVPSSQPMTENAPDRAKKGDPSAPSQSELHPALSQAFQGKNSPQVLSEFSGPPLTPTTVGGPRKASFRFRDEDFYSILSLNSRRESDDTEEETQSEECLWVGVRSPCSPSHHKRSRFGGTSTPQAKNKNFEENAENCRGHSSRRSEPSHGSLRISNAMEPATERPSAGQRLSQDPGLPDRESATEKDRGGSENAKKSPLSWDTKSEPRQEVGVNAENVWSDCISVEHRPGTHDSEGYWKDYLNSSQNSLDYFISGRPISPRSSVNSSYNPPASFMHSALRDDIPVDLSMSSTSVHSSDSEGNSGFHVCQPLSPIRNRTPFASAENHNYFPVNSAHEFAVREAEDTTLTSQPQGAPLYTDLLLNPQGNLSLVDSSSSSPSRMNSEGHLHVSGSLQENTPFTFFAVSHFPNQNDNGSRMAASGFTDEKETSKIKADPEKLKKLQESLLEEDSEEEGDLCRICQIAGGSPSNPLLEPCGCVGSLQFVHQECLKKWLKVKITSGADLGAVKTCEMCKQGLLVDLGDFNMIEFYQKHQQSQAQNELMNSGLYLVLLLHLYEQRFAELMRLNHNQVERERLSRNYPQPRTEENENSELGDGNEGSISQSQVV.

Disordered stretches follow at residues 33–81, 101–268, and 284–415; these read LRRQ…LTEP, QTSV…RKAS, and SRRE…EVGV. Positions 34–49 are enriched in basic and acidic residues; sequence RRQEYRRDPNEKKRDQ. The segment covering 237–249 has biased composition (polar residues); sequence QAFQGKNSPQVLS. 2 stretches are compositionally biased toward basic and acidic residues: residues 330-349 and 379-397; these read KNFE…RSEP and LPDR…ENAK. The segment at 651 to 721 adopts an RING-CH-type zinc-finger fold; the sequence is DSEEEGDLCR…EMCKQGLLVD (71 aa). Zn(2+) contacts are provided by cysteine 659, cysteine 662, cysteine 677, cysteine 679, histidine 687, cysteine 690, cysteine 711, and cysteine 714. The tract at residues 773 to 808 is disordered; sequence ERERLSRNYPQPRTEENENSELGDGNEGSISQSQVV.

The catalysed reaction is S-ubiquitinyl-[E2 ubiquitin-conjugating enzyme]-L-cysteine + [acceptor protein]-L-lysine = [E2 ubiquitin-conjugating enzyme]-L-cysteine + N(6)-ubiquitinyl-[acceptor protein]-L-lysine.. It functions in the pathway protein modification; protein ubiquitination. In terms of biological role, E3 ubiquitin-protein ligase. E3 ubiquitin ligases accept ubiquitin from an E2 ubiquitin-conjugating enzyme in the form of a thioester and then directly transfer the ubiquitin to targeted substrates. The polypeptide is Probable E3 ubiquitin-protein ligase MARCHF10 (Homo sapiens (Human)).